Reading from the N-terminus, the 125-residue chain is Large ribosomal subunit protein bL12 (125 aa).

It belongs to the bacterial ribosomal protein bL12 family. Homodimer. Part of the ribosomal stalk of the 50S ribosomal subunit. Forms a multimeric L10(L12)X complex, where L10 forms an elongated spine to which 2 to 4 L12 dimers bind in a sequential fashion. Binds GTP-bound translation factors.

Its function is as follows. Forms part of the ribosomal stalk which helps the ribosome interact with GTP-bound translation factors. Is thus essential for accurate translation. The sequence is that of Large ribosomal subunit protein bL12 from Rhizobium leguminosarum bv. trifolii (strain WSM2304).